A 186-amino-acid polypeptide reads, in one-letter code: MAVIKLDEVNKNFVNEVIEAGKLVLGEDIVKSIKACYQCGTCTGSCPSGRRTAYRTRKVLRKVLLGLDDVLDSDDIWYCTTCYTCYERCPRDVKITEIIKTLRNIAAQKGNMALAHRKTASYVLRFGHAVPANNQIVELRGKLGLPAKSPTAQFSEKDLEEVRTLIKELKFDKLIAFDWEKMDLKE.

4Fe-4S ferredoxin-type domains are found at residues 26 to 56 and 67 to 99; these read GEDI…AYRT and LDDV…TEII. C36, C39, C42, C46, C79, C82, C85, and C89 together coordinate [4Fe-4S] cluster.

Belongs to the HdrC family. In terms of assembly, the heterodisulfide reductase is composed of three subunits; HdrA, HdrB and HdrC. It depends on [4Fe-4S] cluster as a cofactor.

The protein operates within cofactor metabolism; coenzyme M-coenzyme B heterodisulfide reduction; coenzyme B and coenzyme M from coenzyme M-coenzyme B heterodisulfide: step 1/1. In terms of biological role, part of a complex that catalyzes the reversible reduction of CoM-S-S-CoB to the thiol-coenzymes H-S-CoM (coenzyme M) and H-S-CoB (coenzyme B). The chain is CoB--CoM heterodisulfide reductase iron-sulfur subunit C 2 (hdrC2) from Methanocaldococcus jannaschii (strain ATCC 43067 / DSM 2661 / JAL-1 / JCM 10045 / NBRC 100440) (Methanococcus jannaschii).